An 87-amino-acid chain; its full sequence is Precursor of CEP8 (87 aa).

The N-terminal stretch at 1–29 is a signal peptide; the sequence is MAKALFFNFCISLLIIAILVSHEIIPTEA. Positions 30–72 are excised as a propeptide; it reads RHLRTHRKSIKNSTLTVHEGAGGLRTGGGSVKTDISKEEHGVD. Residue Asn41 is glycosylated (N-linked (GlcNAc...) asparagine). Positions 41–87 are disordered; that stretch reads NSTLTVHEGAGGLRTGGGSVKTDISKEEHGVDEFRPTTPGNSPGIGH. Positions 49–59 are enriched in gly residues; the sequence is GAGGLRTGGGS. Positions 63–75 are enriched in basic and acidic residues; sequence DISKEEHGVDEFR. Pro76, Pro79, and Pro83 each carry hydroxyproline.

Belongs to the C-terminally encoded plant signaling peptide (CEP) family. In terms of assembly, interacts with CEP receptors (e.g. CEPR1 and CEPR2). The mature small signaling peptide is generated by proteolytic processing of the longer precursor. Expressed in lateral root primordia and in lateral roots excluding the meristem region. Also present in the aerial tissues, such as leaf petioles and the shoot apex region.

The protein localises to the secreted. Its subcellular location is the extracellular space. It is found in the apoplast. Its function is as follows. Extracellular signaling peptide that may regulate primary root growth rate and systemic nitrogen (N)-demand signaling. Mediates up-regulation of genes involved in N uptake and assimilation pathways. This Arabidopsis thaliana (Mouse-ear cress) protein is Precursor of CEP8.